Reading from the N-terminus, the 452-residue chain is Methionine aminopeptidase 2-1 (452 aa).

The segment at 1–100 is disordered; it reads MAAKVADDVA…VRIDEVFPND (100 aa). Residues 37 to 51 show a composition bias toward acidic residues; that stretch reads EHDDSDDDNEAEDGA. A compositionally biased stretch (basic residues) spans 60–73; it reads KKKKKRKPRKKKKA. A substrate-binding site is contributed by H205. A divalent metal cation-binding residues include D225, D236, and H305. Residue H313 coordinates substrate. Positions 338 and 433 each coordinate a divalent metal cation.

Belongs to the peptidase M24A family. Methionine aminopeptidase eukaryotic type 2 subfamily. Co(2+) is required as a cofactor. The cofactor is Zn(2+). Mn(2+) serves as cofactor. It depends on Fe(2+) as a cofactor.

Its subcellular location is the cytoplasm. It carries out the reaction Release of N-terminal amino acids, preferentially methionine, from peptides and arylamides.. Its function is as follows. Cotranslationally removes the N-terminal methionine from nascent proteins. The N-terminal methionine is often cleaved when the second residue in the primary sequence is small and uncharged (Met-Ala-, Cys, Gly, Pro, Ser, Thr, or Val). In Pyrenophora teres f. teres (strain 0-1) (Barley net blotch fungus), this protein is Methionine aminopeptidase 2-1.